The sequence spans 345 residues: Tubulin-specific chaperone C (345 aa).

Met-1 carries the post-translational modification N-acetylmethionine. The disordered stretch occupies residues 1–56 (METGGLSAAALANGDLGSQRERTLVPERLQKREHERQLEVERRKQKRQDQEVEEEK). Residues 18–50 (SQRERTLVPERLQKREHERQLEVERRKQKRQDQ) are compositionally biased toward basic and acidic residues. 2 positions are modified to phosphoserine: Ser-80 and Ser-167. The disordered stretch occupies residues 139–170 (FKTRKKDAASATQVASAPDAPAAEGSLTSPPP). In terms of domain architecture, C-CAP/cofactor C-like spans 170 to 322 (PLKEEGDFDS…NWNDVDDFNW (153 aa)).

This sequence belongs to the TBCC family. Supercomplex made of cofactors A to E. Cofactors A and D function by capturing and stabilizing tubulin in a quasi-native conformation. Cofactor E binds to the cofactor D-tubulin complex; interaction with cofactor C then causes the release of tubulin polypeptides that are committed to the native state.

It localises to the cytoplasm. In terms of biological role, tubulin-folding protein; involved in the final step of the tubulin folding pathway. The protein is Tubulin-specific chaperone C (TBCC) of Bos taurus (Bovine).